The primary structure comprises 67 residues: Small ribosomal subunit protein bS21 (67 aa).

It belongs to the bacterial ribosomal protein bS21 family.

This chain is Small ribosomal subunit protein bS21, found in Oleidesulfovibrio alaskensis (strain ATCC BAA-1058 / DSM 17464 / G20) (Desulfovibrio alaskensis).